The primary structure comprises 58 residues: Small ribosomal subunit protein bS21 (58 aa).

The protein belongs to the bacterial ribosomal protein bS21 family.

This is Small ribosomal subunit protein bS21 from Streptococcus pyogenes serotype M49 (strain NZ131).